A 527-amino-acid polypeptide reads, in one-letter code: Protein disulfide-isomerase A2 (527 aa).

An N-terminal signal peptide occupies residues 1–20; it reads MDKQLLPVLLLLLGVSGSWG. The disordered stretch occupies residues 20–41; that stretch reads GQGEEPGGPSEVLPEEPTGEEV. Residues 29 to 155 enclose the Thioredoxin 1 domain; it reads SEVLPEEPTG…IAEWLRRRVG (127 aa). Residues Cys-74 and Cys-77 each act as nucleophile in the active site. Cys-74 and Cys-77 are oxidised to a cystine. Residues Asn-130 and Asn-287 are each glycosylated (N-linked (GlcNAc...) asparagine). A Thioredoxin 2 domain is found at 355–499; it reads VIAITAASVA…FSKFLDSGGH (145 aa). Active-site nucleophile residues include Cys-421 and Cys-424. Cysteines 421 and 424 form a disulfide. Positions 495–527 are disordered; sequence DSGGHLPKEEPKEPAASAPEAQANSTLGPKEEL. Asn-518 carries N-linked (GlcNAc...) asparagine glycosylation. Residues 524 to 527 carry the Prevents secretion from ER motif; that stretch reads KEEL.

It belongs to the protein disulfide isomerase family. Part of a large chaperone multiprotein complex comprising DNAJB11, HSP90B1, HSPA5, HYOU, PDIA2, PDIA4, PDIA6, PPIB, SDF2L1, UGGT1 and very small amounts of ERP29, but not, or at very low levels, CALR nor CANX. Post-translationally, glycosylated. As to expression, highly expressed in pancreas.

The protein localises to the endoplasmic reticulum lumen. The enzyme catalyses Catalyzes the rearrangement of -S-S- bonds in proteins.. Acts as an intracellular estrogen-binding protein. May be involved in modulating cellular levels and biological functions of estrogens in the pancreas. May act as a chaperone that inhibits aggregation of misfolded proteins. The sequence is that of Protein disulfide-isomerase A2 from Mus musculus (Mouse).